Consider the following 403-residue polypeptide: MATATSASLFSTVSSSYSKASSIPHSRLQSVKFNSVPSFTGLKSTSLISGSDSSSLAKTLRGSVTKAQTSDKKPYGFKINASYKVAVLGAAGGIGQPLSLLIKMSPLVSTLHLYDIANVKGVAADLSHCNTPSQVRDFTGPSELADCLKDVNVVVIPAGVPRKPGMTRDDLFNINANIVKTLVEAVAENCPNAFIHIISNPVNSTVPIAAEVLKKKGVYDPKKLFGVTTLDVVRANTFVSQKKNLKLIDVDVPVIGGHAGITILPLLSKTKPSVNFTDEEIQELTVRIQNAGTEVVDAKAGAGSATLSMAYAAARFVESSLRALDGDGDVYECSFVESTLTDLPFFASRVKIGKNGLEAVIESDLQGLTEYEQKALEALKVELKASIDKGVAFANKPAAAAAN.

The transit peptide at 1–80 directs the protein to the chloroplast; sequence MATATSASLF…DKKPYGFKIN (80 aa). NAD(+) is bound by residues 89 to 95 and Asp115; that span reads GAAGGIG. Substrate contacts are provided by Arg162 and Arg168. Residues Asn175 and 198 to 200 each bind NAD(+); that span reads ISN. Asn200 and Arg234 together coordinate substrate. His258 acts as the Proton acceptor in catalysis. Met309 contributes to the NAD(+) binding site.

It belongs to the LDH/MDH superfamily. MDH type 1 family. Homodimer. Expressed in rosette leaves. Expressed in meristematic regions of roots and shoots, cotyledons, young leaves, trichomes, stamen, pollen, tapetum, gynoecium and ovules.

The protein localises to the plastid. It localises to the chloroplast stroma. It catalyses the reaction (S)-malate + NAD(+) = oxaloacetate + NADH + H(+). Catalyzes a reversible NAD-dependent dehydrogenase reaction involved in central metabolism and redox homeostasis between organelle compartments. Plays a key role in the metabolism of dark chloroplasts and non-green plastids. Essential for embryo viability. Plays an essential role in heterotrophic metabolism in embryos, and autotrophic metabolism in photosynthetic tissues as well. In Arabidopsis thaliana (Mouse-ear cress), this protein is Malate dehydrogenase, chloroplastic.